The following is a 142-amino-acid chain: Nucleoside diphosphate kinase (142 aa).

Positions 11, 59, 87, 93, 104, and 114 each coordinate ATP. Residue His117 is the Pros-phosphohistidine intermediate of the active site.

It belongs to the NDK family. As to quaternary structure, homotetramer. Requires Mg(2+) as cofactor.

It is found in the cytoplasm. It catalyses the reaction a 2'-deoxyribonucleoside 5'-diphosphate + ATP = a 2'-deoxyribonucleoside 5'-triphosphate + ADP. It carries out the reaction a ribonucleoside 5'-diphosphate + ATP = a ribonucleoside 5'-triphosphate + ADP. Major role in the synthesis of nucleoside triphosphates other than ATP. The ATP gamma phosphate is transferred to the NDP beta phosphate via a ping-pong mechanism, using a phosphorylated active-site intermediate. This is Nucleoside diphosphate kinase from Dechloromonas aromatica (strain RCB).